The chain runs to 329 residues: Ketol-acid reductoisomerase (NADP(+)) (329 aa).

Residues 1–181 form the KARI N-terminal Rossmann domain; the sequence is MKVYYEQDAN…GGTRSGVIET (181 aa). NADP(+) is bound by residues 24-27, arginine 47, and 82-85; these read YGSQ and DQYQ. Residue histidine 107 is part of the active site. An NADP(+)-binding site is contributed by glycine 133. Positions 182 to 327 constitute a KARI C-terminal knotted domain; that stretch reads TFREETETDL…ARLRSMMPWL (146 aa). Positions 190, 194, 226, and 230 each coordinate Mg(2+). Serine 251 is a substrate binding site.

The protein belongs to the ketol-acid reductoisomerase family. Mg(2+) serves as cofactor.

It catalyses the reaction (2R)-2,3-dihydroxy-3-methylbutanoate + NADP(+) = (2S)-2-acetolactate + NADPH + H(+). It carries out the reaction (2R,3R)-2,3-dihydroxy-3-methylpentanoate + NADP(+) = (S)-2-ethyl-2-hydroxy-3-oxobutanoate + NADPH + H(+). The protein operates within amino-acid biosynthesis; L-isoleucine biosynthesis; L-isoleucine from 2-oxobutanoate: step 2/4. Its pathway is amino-acid biosynthesis; L-valine biosynthesis; L-valine from pyruvate: step 2/4. In terms of biological role, involved in the biosynthesis of branched-chain amino acids (BCAA). Catalyzes an alkyl-migration followed by a ketol-acid reduction of (S)-2-acetolactate (S2AL) to yield (R)-2,3-dihydroxy-isovalerate. In the isomerase reaction, S2AL is rearranged via a Mg-dependent methyl migration to produce 3-hydroxy-3-methyl-2-ketobutyrate (HMKB). In the reductase reaction, this 2-ketoacid undergoes a metal-dependent reduction by NADPH to yield (R)-2,3-dihydroxy-isovalerate. This chain is Ketol-acid reductoisomerase (NADP(+)), found in Oleidesulfovibrio alaskensis (strain ATCC BAA-1058 / DSM 17464 / G20) (Desulfovibrio alaskensis).